Here is a 68-residue protein sequence, read N- to C-terminus: Large ribosomal subunit protein bL32 (68 aa).

It belongs to the bacterial ribosomal protein bL32 family.

The polypeptide is Large ribosomal subunit protein bL32 (Aster yellows witches'-broom phytoplasma (strain AYWB)).